A 345-amino-acid polypeptide reads, in one-letter code: Peter Pan-like protein (345 aa).

Positions 34-295 (PKSFVFSRMK…LVKVEEGLCT (262 aa)) constitute a Brix domain. Residues 307-329 (GKKEKLKKKQDEEEEEDSEEEGE) are a coiled coil. The interval 308 to 345 (KKEKLKKKQDEEEEEDSEEEGEEGSEEDGEDMDEDFED) is disordered. Residues 318-345 (EEEEEDSEEEGEEGSEEDGEDMDEDFED) show a composition bias toward acidic residues.

Belongs to the PPAN family.

Its function is as follows. May play a role in cell growth, differentiation and cell cycle progression. This Arabidopsis thaliana (Mouse-ear cress) protein is Peter Pan-like protein (PPAN).